Here is a 117-residue protein sequence, read N- to C-terminus: Large ribosomal subunit protein bL20c (117 aa).

The protein belongs to the bacterial ribosomal protein bL20 family.

Its subcellular location is the plastid. It localises to the chloroplast. In terms of biological role, binds directly to 23S ribosomal RNA and is necessary for the in vitro assembly process of the 50S ribosomal subunit. It is not involved in the protein synthesizing functions of that subunit. This Vitis vinifera (Grape) protein is Large ribosomal subunit protein bL20c.